We begin with the raw amino-acid sequence, 404 residues long: Transcriptional repressor OPI1 (404 aa).

Ser10 is subject to Phosphoserine. A disordered region spans residues 25–51 (QSCRQKSQPSEDVSQADKMPASESSTT). Positions 26–37 (SCRQKSQPSEDV) are enriched in polar residues. The tract at residues 109 to 138 (KRQKLSRAIAKGKDNLKEYKLNMSIESKKR) is basic motif. Positions 139 to 160 (LVTCLHLLKLANKQLSDKISCL) are leucine-zipper. 3 disordered regions span residues 170–201 (HPLH…DEEF), 305–327 (LQQQ…SSVT), and 378–404 (QQQQ…DSKD). A compositionally biased stretch (acidic residues) spans 186-201 (GEDETSSDEDDDDEEF). The short motif at 200 to 206 (EFFDASE) is the FFAT element. Over residues 378 to 387 (QQQQYRQQQQ) the composition is skewed to low complexity. Residues 394–404 (KPSQDNVDSKD) are compositionally biased toward polar residues.

As to quaternary structure, interacts with SCS2.

Its subcellular location is the endoplasmic reticulum. It localises to the nucleus. Functionally, negative regulator of the transcriptional complex INO2-INO4 in response to phospholipid precursor availability. When precursors become limiting, OPI1 is retained at the endoplasmic reticulum (ER) and INO2-INO4 activates INO1 and other genes required for phospholipid biosynthesis, whereas abundant precursor availability results in targeting of OPI1 to the nucleus to repress transcription of these genes. Binds directly to phosphatidic acid, which is required for ER targeting and may act as sensing mechanism for precursor availability, as phosphatidic acid becomes rapidly depleted upon phospholipid biosynthesis. The protein is Transcriptional repressor OPI1 (OPI1) of Saccharomyces cerevisiae (strain ATCC 204508 / S288c) (Baker's yeast).